The chain runs to 425 residues: UPF0597 protein KPN78578_43500 (425 aa).

Belongs to the UPF0597 family.

The chain is UPF0597 protein KPN78578_43500 from Klebsiella pneumoniae subsp. pneumoniae (strain ATCC 700721 / MGH 78578).